We begin with the raw amino-acid sequence, 121 residues long: Neuromedin-B (121 aa).

The N-terminal stretch at 1–24 (MARRAGGARMFGSLLLFALLAAGV) is a signal peptide. Met-56 carries the methionine amide modification. A propeptide spanning residues 60-121 (SLEPSSPSPL…RRLLVQILQK (62 aa)) is cleaved from the precursor.

The protein belongs to the bombesin/neuromedin-B/ranatensin family.

The protein localises to the secreted. It localises to the cell projection. Its subcellular location is the neuron projection. Stimulates smooth muscle contraction. Induces sighing by acting directly on the pre-Botzinger complex, a cluster of several thousand neurons in the ventrolateral medulla responsible for inspiration during respiratory activity. Contributes to the induction of sneezing following exposure to chemical irritants or allergens which causes release of NMB by nasal sensory neurons and activation of NMBR-expressing neurons in the sneeze-evoking region of the brainstem. These in turn activate neurons of the caudal ventral respiratory group, giving rise to the sneezing response. Contributes to induction of acute itch, possibly through activation of the NMBR receptor on dorsal root ganglion neurons. Increases expression of NMBR and steroidogenic mediators STAR, CYP11A1 and HSD3B1 in Leydig cells, induces secretion of testosterone by Leydig cells and also promotes Leydig cell proliferation. Plays a role in the innate immune response to influenza A virus infection by enhancing interferon alpha expression and reducing expression of IL6. Plays a role in CSF1-induced proliferation of osteoclast precursors by contributing to the positive regulation of the expression of the CSF1 receptor CSF1R. The polypeptide is Neuromedin-B (NMB) (Homo sapiens (Human)).